The following is a 392-amino-acid chain: DNA polymerase IV (392 aa).

Positions 6-186 (IVHLDADAFF…LPIGKLPGVG (181 aa)) constitute a UmuC domain. Residues Asp10 and Asp103 each coordinate Mg(2+). Residue Glu104 is part of the active site.

The protein belongs to the DNA polymerase type-Y family. Monomer. Mg(2+) serves as cofactor.

The protein localises to the cytoplasm. It catalyses the reaction DNA(n) + a 2'-deoxyribonucleoside 5'-triphosphate = DNA(n+1) + diphosphate. Its function is as follows. Poorly processive, error-prone DNA polymerase involved in untargeted mutagenesis. Copies undamaged DNA at stalled replication forks, which arise in vivo from mismatched or misaligned primer ends. These misaligned primers can be extended by PolIV. Exhibits no 3'-5' exonuclease (proofreading) activity. May be involved in translesional synthesis, in conjunction with the beta clamp from PolIII. The polypeptide is DNA polymerase IV (Opitutus terrae (strain DSM 11246 / JCM 15787 / PB90-1)).